The sequence spans 1741 residues: S-layer protein (1741 aa).

Polar residues predominate over residues 894–904 (SFTSDSANGSG). Positions 894 to 913 (SFTSDSANGSGHSVEGGTGD) are disordered.

Post-translationally, glycosylated.

It is found in the secreted. It localises to the cell wall. Its subcellular location is the S-layer. S-layer protein. The S-layer is a paracrystalline mono-layered assembly of proteins which coats the surface of bacteria. Under laboratory conditions, has a supportive but not a critical role in the function of the cyanobacterium. Shows no apparent hemolytic activity against sheep erythrocytes, however, a slight hemolytic activity is detected during the conformational change caused by the rebinding of Ca(2+). In Synechocystis sp. (strain ATCC 27184 / PCC 6803 / Kazusa), this protein is S-layer protein.